Here is an 84-residue protein sequence, read N- to C-terminus: Neurotoxin BmK-M11 (84 aa).

An N-terminal signal peptide occupies residues 1 to 19 (MNYLVMISFALLLMTGVES). Residues 21–83 (RDAYIAKPEN…VPIRVPGKCH (63 aa)) enclose the LCN-type CS-alpha/beta domain. 4 disulfides stabilise this stretch: Cys-31-Cys-82, Cys-35-Cys-55, Cys-41-Cys-65, and Cys-45-Cys-67. Residue Arg-84 is a propeptide, removed by a carboxypeptidase.

Belongs to the long (4 C-C) scorpion toxin superfamily. Sodium channel inhibitor family. Alpha subfamily. As to expression, expressed by the venom gland.

Its subcellular location is the secreted. In terms of biological role, alpha toxins bind voltage-independently at site-3 of sodium channels (Nav) and inhibit the inactivation of the activated channels, thereby blocking neuronal transmission. This recombinant toxin selectively inhibits the fast inactivation of mNav1.4/SCN4A (EC(50)=82.3 nM) (tested in HEK293 cells). The chain is Neurotoxin BmK-M11 from Olivierus martensii (Manchurian scorpion).